Reading from the N-terminus, the 521-residue chain is MAVIKRALISVSDKTGIVEFARELAGYGVEILSTGGTAALLRQEGLAVKDVSEYTGFPEMLDGRVKTLHPKVHGGLLGMRENPAHVAKMKEHGIEPIDMVVVNLYPFEATVAKPDCTLEDAIENIDIGGPTMLRSAAKNNRDVTVVVDHVDYDQVLAEMKGSGGAVSRGTNFKLAVKVYQHTAAYDGAISNWLGQRMGDELADFSDTLTVQFKKVQDMRYGENPHQKAAFYVERDVQEASISTSRQLQGKELSYNNIADTDAALECVKQFNEGPACVIVKHANPCGVALGSNLLEAYNRAFSTDSESAFGGIIAFNRELDGTTAQAIVERQFVEVIIAPAVSAEAIDVVATKKNVRLLECGYWPQEPGARYDFKRVNGGLLVQDADLLLSGDIKPVTKRVPTEEEMRDLLFTWRVAKFVKSNAIVYGKDGMTIGVGAGQMSRVNSARIAGIKAELAGLEVPGSVMASDAFFPFRDGLDNAAKAGIKAVIQPGGSIRDEEVIAAADEHGIAMVFTGMRHFRH.

Residues 1 to 147 (MAVIKRALIS…KNNRDVTVVV (147 aa)) form the MGS-like domain.

The protein belongs to the PurH family.

The enzyme catalyses (6R)-10-formyltetrahydrofolate + 5-amino-1-(5-phospho-beta-D-ribosyl)imidazole-4-carboxamide = 5-formamido-1-(5-phospho-D-ribosyl)imidazole-4-carboxamide + (6S)-5,6,7,8-tetrahydrofolate. It carries out the reaction IMP + H2O = 5-formamido-1-(5-phospho-D-ribosyl)imidazole-4-carboxamide. It participates in purine metabolism; IMP biosynthesis via de novo pathway; 5-formamido-1-(5-phospho-D-ribosyl)imidazole-4-carboxamide from 5-amino-1-(5-phospho-D-ribosyl)imidazole-4-carboxamide (10-formyl THF route): step 1/1. Its pathway is purine metabolism; IMP biosynthesis via de novo pathway; IMP from 5-formamido-1-(5-phospho-D-ribosyl)imidazole-4-carboxamide: step 1/1. The polypeptide is Bifunctional purine biosynthesis protein PurH (Syntrophotalea carbinolica (strain DSM 2380 / NBRC 103641 / GraBd1) (Pelobacter carbinolicus)).